The following is a 164-amino-acid chain: Nitrogen regulatory protein homolog (164 aa).

One can recognise a PTS EIIA type-2 domain in the interval 5-152 (ELLSPENIRQ…DEIWQVFEIT (148 aa)).

Its function is as follows. Not known; lacks the phosphorylation site found in other PtsN proteins. This Haemophilus influenzae (strain ATCC 51907 / DSM 11121 / KW20 / Rd) protein is Nitrogen regulatory protein homolog (ptsN).